The following is a 218-amino-acid chain: Large ribosomal subunit protein mL54 (218 aa).

The protein belongs to the mitochondrion-specific ribosomal protein mL54 family. As to quaternary structure, component of the mitochondrial large ribosomal subunit (mt-LSU). Mature N.crassa 74S mitochondrial ribosomes consist of a small (37S) and a large (54S) subunit. The 37S small subunit contains a 16S ribosomal RNA (16S mt-rRNA) and 32 different proteins. The 54S large subunit contains a 23S rRNA (23S mt-rRNA) and 42 different proteins.

The protein resides in the mitochondrion. Its function is as follows. Component of the mitochondrial ribosome (mitoribosome), a dedicated translation machinery responsible for the synthesis of mitochondrial genome-encoded proteins, including at least some of the essential transmembrane subunits of the mitochondrial respiratory chain. The mitoribosomes are attached to the mitochondrial inner membrane and translation products are cotranslationally integrated into the membrane. This is Large ribosomal subunit protein mL54 (mrpl37) from Neurospora crassa (strain ATCC 24698 / 74-OR23-1A / CBS 708.71 / DSM 1257 / FGSC 987).